The sequence spans 157 residues: Baculoviral IAP repeat-containing protein 5.2-A (157 aa).

One copy of the BIR repeat lies at 31 to 101; sequence RLRTFSNWPF…KHSPSCLFIA (71 aa). T47 carries the post-translational modification Phosphothreonine; by CDK1. Zn(2+) contacts are provided by C70, C73, H90, and C97.

The protein belongs to the IAP family. Component of the CPC at least composed of survivin/birc5, incenp, cdca8/borealin and/or cdca9/dasra-A, and aurkb/aurora-B. Interacts directly with incenp (via N-terminus). Interacts with rxra; the interaction is stronger in the absence of 9-cis retinoic acids. Post-translationally, ubiquitination is required for centrosome-targeting. Highly expressed in vascular endothelial cells of tadpoles.

The protein localises to the cytoplasm. It is found in the nucleus. It localises to the chromosome. The protein resides in the centromere. Its subcellular location is the cytoskeleton. The protein localises to the spindle. Its function is as follows. Component of the chromosomal passenger complex (CPC), a complex that acts as a key regulator of mitosis. The CPC complex has essential functions at the centromere in ensuring correct chromosome alignment and segregation and is required for chromatin-induced microtubule stabilization and spindle assembly. Does not appear to exhibit anti-apoptotic activity. Plays a role in increasing blood vessel size during development. The chain is Baculoviral IAP repeat-containing protein 5.2-A (birc5.2-a) from Xenopus laevis (African clawed frog).